The following is a 162-amino-acid chain: Ribosome maturation factor RimP (162 aa).

The protein belongs to the RimP family.

The protein resides in the cytoplasm. Functionally, required for maturation of 30S ribosomal subunits. This chain is Ribosome maturation factor RimP, found in Cupriavidus pinatubonensis (strain JMP 134 / LMG 1197) (Cupriavidus necator (strain JMP 134)).